Consider the following 317-residue polypeptide: Transaldolase (317 aa).

The active-site Schiff-base intermediate with substrate is the K132.

It belongs to the transaldolase family. Type 1 subfamily. As to quaternary structure, homodimer.

It is found in the cytoplasm. The enzyme catalyses D-sedoheptulose 7-phosphate + D-glyceraldehyde 3-phosphate = D-erythrose 4-phosphate + beta-D-fructose 6-phosphate. It functions in the pathway carbohydrate degradation; pentose phosphate pathway; D-glyceraldehyde 3-phosphate and beta-D-fructose 6-phosphate from D-ribose 5-phosphate and D-xylulose 5-phosphate (non-oxidative stage): step 2/3. Its function is as follows. Transaldolase is important for the balance of metabolites in the pentose-phosphate pathway. The polypeptide is Transaldolase (Shigella dysenteriae serotype 1 (strain Sd197)).